The sequence spans 286 residues: Protein HEAT-STRESS-ASSOCIATED 32 (286 aa).

This sequence belongs to the phosphosulfolactate synthase family.

Transactivator required, together with HSP101, for long-term acquired thermotolerance (LAT) maintenance, probably by regulating heat-inducible genes expression, thus being a cellular component of thermomemory. This chain is Protein HEAT-STRESS-ASSOCIATED 32, found in Arabidopsis thaliana (Mouse-ear cress).